Consider the following 35-residue polypeptide: uncharacterized protein (35 aa).

This is an uncharacterized protein from Archaeoglobus fulgidus (strain ATCC 49558 / DSM 4304 / JCM 9628 / NBRC 100126 / VC-16).